We begin with the raw amino-acid sequence, 174 residues long: Co-chaperone protein HscB (174 aa).

One can recognise a J domain in the interval 2-74 (NYFTLFDLPR…LNRAIYFLCL (73 aa)).

This sequence belongs to the HscB family. As to quaternary structure, interacts with HscA and stimulates its ATPase activity. Interacts with IscU.

Co-chaperone involved in the maturation of iron-sulfur cluster-containing proteins. Seems to help targeting proteins to be folded toward HscA. This chain is Co-chaperone protein HscB, found in Buchnera aphidicola subsp. Acyrthosiphon pisum (strain Tuc7).